The following is a 275-amino-acid chain: 4-hydroxy-3-methylbut-2-enyl diphosphate reductase (275 aa).

Residue cysteine 12 coordinates [4Fe-4S] cluster. (2E)-4-hydroxy-3-methylbut-2-enyl diphosphate is bound by residues histidine 36 and histidine 70. Residues histidine 36 and histidine 70 each coordinate dimethylallyl diphosphate. Residues histidine 36 and histidine 70 each contribute to the isopentenyl diphosphate site. [4Fe-4S] cluster is bound at residue cysteine 92. Histidine 120 contacts (2E)-4-hydroxy-3-methylbut-2-enyl diphosphate. Residue histidine 120 coordinates dimethylallyl diphosphate. Isopentenyl diphosphate is bound at residue histidine 120. Glutamate 122 functions as the Proton donor in the catalytic mechanism. Threonine 158 provides a ligand contact to (2E)-4-hydroxy-3-methylbut-2-enyl diphosphate. Residue cysteine 186 participates in [4Fe-4S] cluster binding. (2E)-4-hydroxy-3-methylbut-2-enyl diphosphate-binding residues include serine 214, serine 215, asparagine 216, and serine 258. Dimethylallyl diphosphate is bound by residues serine 214, serine 215, asparagine 216, and serine 258. Residues serine 214, serine 215, asparagine 216, and serine 258 each contribute to the isopentenyl diphosphate site.

Belongs to the IspH family. [4Fe-4S] cluster serves as cofactor.

The enzyme catalyses isopentenyl diphosphate + 2 oxidized [2Fe-2S]-[ferredoxin] + H2O = (2E)-4-hydroxy-3-methylbut-2-enyl diphosphate + 2 reduced [2Fe-2S]-[ferredoxin] + 2 H(+). It catalyses the reaction dimethylallyl diphosphate + 2 oxidized [2Fe-2S]-[ferredoxin] + H2O = (2E)-4-hydroxy-3-methylbut-2-enyl diphosphate + 2 reduced [2Fe-2S]-[ferredoxin] + 2 H(+). Its pathway is isoprenoid biosynthesis; dimethylallyl diphosphate biosynthesis; dimethylallyl diphosphate from (2E)-4-hydroxy-3-methylbutenyl diphosphate: step 1/1. It functions in the pathway isoprenoid biosynthesis; isopentenyl diphosphate biosynthesis via DXP pathway; isopentenyl diphosphate from 1-deoxy-D-xylulose 5-phosphate: step 6/6. Its function is as follows. Catalyzes the conversion of 1-hydroxy-2-methyl-2-(E)-butenyl 4-diphosphate (HMBPP) into a mixture of isopentenyl diphosphate (IPP) and dimethylallyl diphosphate (DMAPP). Acts in the terminal step of the DOXP/MEP pathway for isoprenoid precursor biosynthesis. In Campylobacter hominis (strain ATCC BAA-381 / DSM 21671 / CCUG 45161 / LMG 19568 / NCTC 13146 / CH001A), this protein is 4-hydroxy-3-methylbut-2-enyl diphosphate reductase.